A 327-amino-acid polypeptide reads, in one-letter code: Leucotoxin LukDv (327 aa).

The signal sequence occupies residues 1 to 26 (MKMKKLVKSSVASSIALLLLSNTVDA).

It belongs to the aerolysin family. As to quaternary structure, toxicity requires sequential binding and synergistic association of a class S and a class F component which form heterooligomeric complexes. LukEv (class S) associates with LukDv (class F).

The protein localises to the secreted. Its function is as follows. Part of a bi-component leucotoxin that acts by forming pores in the membrane of the target cells. The activity of LukEv-LukDv to rabbit leukocytes is similar to that of the Panton-Valentine leucocidin (PVL). LukEv-LukDv is hemolytic to rabbit red blood cells although the activity is only 8% of gamma-hemolysin. The chain is Leucotoxin LukDv (lukDv) from Staphylococcus aureus (strain NCTC 8325 / PS 47).